A 465-amino-acid chain; its full sequence is Chromosomal replication initiator protein DnaA (465 aa).

A domain I, interacts with DnaA modulators region spans residues 1–80 (MLWTDCLTRL…VEILVDSRPG (80 aa)). The interval 80-127 (GAILSPAEQPATTTAALSSTPVVPQRVKKEVVEPAATQSNKILNSKKR) is domain II. The tract at residues 128 to 345 (LLNPLFTFSL…GALNKVVAIA (218 aa)) is domain III, AAA+ region. ATP is bound by residues G173, G175, K176, and T177. Positions 346 to 465 (RFKGSQIDLD…YKNLLRLLQS (120 aa)) are domain IV, binds dsDNA.

This sequence belongs to the DnaA family. In terms of assembly, oligomerizes as a right-handed, spiral filament on DNA at oriC.

The protein resides in the cytoplasm. Its function is as follows. Plays an essential role in the initiation and regulation of chromosomal replication. ATP-DnaA binds to the origin of replication (oriC) to initiate formation of the DNA replication initiation complex once per cell cycle. Binds the DnaA box (a 9 base pair repeat at the origin) and separates the double-stranded (ds)DNA. Forms a right-handed helical filament on oriC DNA; dsDNA binds to the exterior of the filament while single-stranded (ss)DNA is stabiized in the filament's interior. The ATP-DnaA-oriC complex binds and stabilizes one strand of the AT-rich DNA unwinding element (DUE), permitting loading of DNA polymerase. After initiation quickly degrades to an ADP-DnaA complex that is not apt for DNA replication. Binds acidic phospholipids. The polypeptide is Chromosomal replication initiator protein DnaA (Acinetobacter baylyi (strain ATCC 33305 / BD413 / ADP1)).